The following is a 246-amino-acid chain: Flagellar L-ring protein (246 aa).

An N-terminal signal peptide occupies residues 1–20 (MMQKCLSPKTLIAALVVLSA). Cysteine 21 is lipidated: N-palmitoyl cysteine. Cysteine 21 is lipidated: S-diacylglycerol cysteine.

Belongs to the FlgH family. The basal body constitutes a major portion of the flagellar organelle and consists of four rings (L,P,S, and M) mounted on a central rod.

It is found in the cell outer membrane. It localises to the bacterial flagellum basal body. Its function is as follows. Assembles around the rod to form the L-ring and probably protects the motor/basal body from shearing forces during rotation. This chain is Flagellar L-ring protein, found in Ruegeria pomeroyi (strain ATCC 700808 / DSM 15171 / DSS-3) (Silicibacter pomeroyi).